The chain runs to 221 residues: N-(5'-phosphoribosyl)anthranilate isomerase (221 aa).

It belongs to the TrpF family.

It carries out the reaction N-(5-phospho-beta-D-ribosyl)anthranilate = 1-(2-carboxyphenylamino)-1-deoxy-D-ribulose 5-phosphate. It functions in the pathway amino-acid biosynthesis; L-tryptophan biosynthesis; L-tryptophan from chorismate: step 3/5. The chain is N-(5'-phosphoribosyl)anthranilate isomerase from Geobacillus thermodenitrificans (strain NG80-2).